Here is a 445-residue protein sequence, read N- to C-terminus: Tubulin beta chain (445 aa).

8 residues coordinate GTP: glutamine 11, glutamate 69, serine 138, glycine 142, threonine 143, glycine 144, asparagine 204, and asparagine 226. Glutamate 69 contributes to the Mg(2+) binding site. The tract at residues 426–445 (QDATAEEEGEFEEEEGDVEA) is disordered. A compositionally biased stretch (acidic residues) spans 429–445 (TAEEEGEFEEEEGDVEA).

The protein belongs to the tubulin family. As to quaternary structure, dimer of alpha and beta chains. A typical microtubule is a hollow water-filled tube with an outer diameter of 25 nm and an inner diameter of 15 nM. Alpha-beta heterodimers associate head-to-tail to form protofilaments running lengthwise along the microtubule wall with the beta-tubulin subunit facing the microtubule plus end conferring a structural polarity. Microtubules usually have 13 protofilaments but different protofilament numbers can be found in some organisms and specialized cells. Interacts with DCX/apicortin; the interaction stabilizes microtubule assembly. Mg(2+) is required as a cofactor.

It localises to the cytoplasm. The protein localises to the cytoskeleton. Tubulin is the major constituent of microtubules, a cylinder consisting of laterally associated linear protofilaments composed of alpha- and beta-tubulin heterodimers. Microtubules grow by the addition of GTP-tubulin dimers to the microtubule end, where a stabilizing cap forms. Below the cap, tubulin dimers are in GDP-bound state, owing to GTPase activity of alpha-tubulin. In Plasmodium falciparum, this protein is Tubulin beta chain.